A 346-amino-acid chain; its full sequence is Peripherin-2 (346 aa).

Residues 1–24 (MALLKVKFDQKKRVKLAQGLWLMN) are Cytoplasmic-facing. The helical transmembrane segment at 25 to 43 (WLSVLAGIVIFSLGLFLKI) threads the bilayer. The Lumenal segment spans residues 44 to 61 (ELRKRSDVMNNSESHFVP). Asparagine 53 is a glycosylation site (N-linked (GlcNAc...) asparagine). Residues 62–80 (NSLIGMGVLSCVFNSLAGK) form a helical membrane-spanning segment. Residues 81–99 (ICYDALDPSKYAKWKPWLK) are Cytoplasmic-facing. The chain crosses the membrane as a helical span at residues 100–123 (SYLVVCVLFNIVLFLVALCCFLMR). At 124–264 (GSLESTLAQG…LSYYGSLMNS (141 aa)) the chain is on the lumenal side. An N-linked (GlcNAc...) asparagine glycan is attached at asparagine 229. Residues 265–290 (MGAVTLLVWLFEVSITIGLRYLHTAL) form a helical membrane-spanning segment. The Cytoplasmic portion of the chain corresponds to 291–346 (EGVSNPEDLECESEGWLLEKSVSETWKAFLESLKKLGKSNQVEAEGADAGQAPEAG). An interaction with MREG region spans residues 341-346 (QAPEAG).

It belongs to the PRPH2/ROM1 family. As to quaternary structure, homodimer; disulfide-linked. Forms a homotetramer. Forms a heterotetramer with ROM1. Homotetramer and heterotetramer core complexes go on to form higher order complexes by formation of intermolecular disulfide bonds. Interacts with MREG. Interacts with STX3. Interacts with SNAP25. Retina (photoreceptor). In rim region of ROS (rod outer segment) disks.

The protein localises to the membrane. It localises to the cell projection. The protein resides in the cilium. It is found in the photoreceptor outer segment. Its subcellular location is the photoreceptor inner segment. Its function is as follows. Essential for retina photoreceptor outer segment disk morphogenesis, may also play a role with ROM1 in the maintenance of outer segment disk structure. Required for the maintenance of retinal outer nuclear layer thickness. Required for the correct development and organization of the photoreceptor inner segment. The protein is Peripherin-2 (PRPH2) of Felis catus (Cat).